The primary structure comprises 372 residues: Alanine racemase (372 aa).

Lys35 serves as the catalytic Proton acceptor; specific for D-alanine. Lys35 carries the N6-(pyridoxal phosphate)lysine modification. Arg143 contributes to the substrate binding site. Catalysis depends on Tyr268, which acts as the Proton acceptor; specific for L-alanine. Substrate is bound at residue Met316.

Belongs to the alanine racemase family. Requires pyridoxal 5'-phosphate as cofactor.

It catalyses the reaction L-alanine = D-alanine. It participates in amino-acid biosynthesis; D-alanine biosynthesis; D-alanine from L-alanine: step 1/1. Catalyzes the interconversion of L-alanine and D-alanine. May also act on other amino acids. The protein is Alanine racemase (alr) of Shewanella frigidimarina (strain NCIMB 400).